Reading from the N-terminus, the 576-residue chain is Arginine--tRNA ligase (576 aa).

The short motif at 126–136 is the 'HIGH' region element; that stretch reads ANPTGPMHIGH.

The protein belongs to the class-I aminoacyl-tRNA synthetase family. As to quaternary structure, monomer.

Its subcellular location is the cytoplasm. It catalyses the reaction tRNA(Arg) + L-arginine + ATP = L-arginyl-tRNA(Arg) + AMP + diphosphate. The sequence is that of Arginine--tRNA ligase from Rickettsia africae (strain ESF-5).